The primary structure comprises 426 residues: Glutamate-1-semialdehyde 2,1-aminomutase (426 aa).

K265 carries the post-translational modification N6-(pyridoxal phosphate)lysine.

Belongs to the class-III pyridoxal-phosphate-dependent aminotransferase family. HemL subfamily. As to quaternary structure, homodimer. It depends on pyridoxal 5'-phosphate as a cofactor.

It is found in the cytoplasm. The catalysed reaction is (S)-4-amino-5-oxopentanoate = 5-aminolevulinate. It participates in porphyrin-containing compound metabolism; protoporphyrin-IX biosynthesis; 5-aminolevulinate from L-glutamyl-tRNA(Glu): step 2/2. The polypeptide is Glutamate-1-semialdehyde 2,1-aminomutase (Yersinia pestis bv. Antiqua (strain Antiqua)).